The sequence spans 401 residues: Jumonji C domain-containing protein 5 (401 aa).

The JmjC domain occupies 255-401 (EYLAQHELFA…PSFSVSFWWE (147 aa)). Residues histidine 306, aspartate 308, and histidine 385 each coordinate Fe cation.

Fe(2+) is required as a cofactor. As to expression, expressed in neurons close to the dorsal lateral neurons involved in circadian rhythm.

The protein resides in the nucleus. Its subcellular location is the nucleoplasm. The protein localises to the cytoplasm. The catalysed reaction is L-arginyl-[protein] + 2-oxoglutarate + O2 = (3R)-3-hydroxy-L-arginyl-[protein] + succinate + CO2. In terms of biological role, bifunctional enzyme that acts both as an endopeptidase and 2-oxoglutarate-dependent monooxygenase. May be involved in regulation of behavior and circadian rhythms. The chain is Jumonji C domain-containing protein 5 from Drosophila melanogaster (Fruit fly).